The sequence spans 147 residues: Hemoglobin subunit beta (147 aa).

Residues 3–147 (EWTDKERTII…VVSALGKQYH (145 aa)) form the Globin domain. Heme b-binding residues include His64 and His93.

The protein belongs to the globin family. Heterotetramer of two alpha chains and two beta chains. In terms of tissue distribution, red blood cells.

Its function is as follows. Involved in oxygen transport from gills to the various peripheral tissues. In Trematomus newnesi (Dusky notothen), this protein is Hemoglobin subunit beta.